Reading from the N-terminus, the 342-residue chain is Ferredoxin--NADP reductase (342 aa).

8 residues coordinate FAD: cysteine 17, aspartate 36, glutamine 44, tyrosine 49, valine 89, phenylalanine 124, aspartate 289, and threonine 330.

Belongs to the ferredoxin--NADP reductase type 2 family. As to quaternary structure, homodimer. Requires FAD as cofactor.

It carries out the reaction 2 reduced [2Fe-2S]-[ferredoxin] + NADP(+) + H(+) = 2 oxidized [2Fe-2S]-[ferredoxin] + NADPH. The chain is Ferredoxin--NADP reductase from Bradyrhizobium sp. (strain ORS 278).